A 1350-amino-acid polypeptide reads, in one-letter code: MDGGMTVSDKGNWSFFGMASENKRPKWAAILSKAMGIQASFMTDQLRTAGPNPEGLISIHNSPDEALAVYSAHHTDGLNTCKICGHNVRDLKAHARQVHLGRLCKIENLAELGLAQTLRIDRDVEFAYIDGCYFWIGARAAPGLSRFFKPDATRCHRCPTVEWPDIENGESLEAVRLTGESPRLTDRARHLLAFHPGDFMASITTLISPKKSMNCEAIYSARGELQRFQLMWRGYGYKGERATAFPTKAVNEGFGTAVHEFLKMYDARTKALSVLPSDTKIYTVRFMEGEEPTTAVIPPGTHSVVPATTPAPEAPGKLNMSSPDLELIRRKGGKRVIEMVSGVAPSGSLVGAPSPSERVMKRKSERPLDDSSAVKRVSKKVTSVTDQECTAWESSIPGVSIERAPTIYTGKSAQTIAGVLTEGGVAPYPLIMDVDGERDLPIDLPNQIITGRVIESLGDLEGDIAARKEVIKKAVEALRVYSYRPLMQLSVIGIFFDEGWIYSVLEKPTGDLKTMSQTLRVLSTTGTFPWGGKSPAGTWKMAIVHHIFRDVVKLVALQNRLKVTPVFGKQDVYVWEHGLTIAPNSVEPRVDITGAQNLIISLLSQYTMFQHTTKLPIKPEVRATLSPDVLKLLDWPPRPPSSEVTEMAGRLGVMGDIGHPTIQFPLDFKIHMGSERVLRPDVLLIKPPKAAPSFYPSMEEVLRVLETPGPRSDESDEMVPASALISHATLAASQRGLVAAHASVGRAQAALSTRGGAFGATPSGEDATSALMKMIQELSNTSIPTSRSLLCELGLSSMRGPAVATPRPAEAPPSTSEGELFDVDAFLEKWTGPAPVEGTAPVPVEIPIVGDDIIRQSMALAGGECWELTETPSGNVVATGFTTPATPTIINPPSPHVFAVPMPPPANPGKRTKSVKRRIEAASKMEGGERDATGSSMDTVRGTGGLVTVKPQSLIRGDELGLMDKWVFEPALDTRTSSYLRGVHRTIVQRWLQNHGSMKPKMCRDPPTFAITDADVPILTTTPDATRRPICVDNNLPSTPMVFTWGDPNGSEPVPTEHRTSYELYRGDIQAAHQCNLYLGPSMEIYAYSPRVWIAQHTFDGANQIWGGFPPVIRYVYLNMMKIRPSKHIPYIYTVIEPHSVKGYKMNMYALITPMGHPVLTTGVAGYSKYLIKALVRTLHAVHSAGLKIGYMHPKNVWVKTDALGSDLQTYYIFDVVTQILENVFMPGSVGGRNAPVIPPEWTSKMTDNGPPLNLITEASDIFCLGRLLTVFCAQQDLTSEQVALIQLMCAAKPEERPCVTDLLVNFNVSPEEPFYPVDIGEMPVKITNTKKAERSNTAYVRFPVQGAQE.

Disordered stretches follow at residues 348–371 (SLVG…LDDS) and 923–944 (SKME…RGTG). Residues 923 to 932 (SKMEGGERDA) show a composition bias toward basic and acidic residues.

This is an uncharacterized protein from Ictalurid herpesvirus 1 (strain Auburn) (IcHV-1).